The primary structure comprises 1010 residues: Eukaryotic translation initiation factor 4E transporter (1010 aa).

A YXXXXLphi motif motif is present at residues 10–16 (YSKVDLL). Disordered regions lie at residues 154–182 (GSNS…RKGS), 196–277 (PDHD…RLVE), 289–320 (YDSK…SKRG), 354–391 (NEER…SNDS), and 921–960 (QSNP…ERIS). A compositionally biased stretch (polar residues) spans 201 to 211 (CMSSSPTFSTS). A compositionally biased stretch (basic and acidic residues) spans 227–247 (DNWDYKNEKTVEASIENEKET). Polar residues predominate over residues 248–263 (SPNGSGSTSSLNQHNQ). Basic and acidic residues-rich tracts occupy residues 354-364 (NEERSVTEDKN) and 372-384 (KNLD…DEAS). The segment covering 934 to 953 (SDSSDSGNVIKANSLTSPSY) has biased composition (polar residues).

This sequence belongs to the 4E-T/EIF4E-T family. Interacts (via YXXXXLphi motif) with eIF4E1. Interacts with DDX6/me31B. In terms of tissue distribution, expressed in all larval and adult organs and tissues, with highest levels in the ovary.

It is found in the cytoplasm. It localises to the P-body. The protein localises to the nucleus. Functionally, eIF4E1-binding protein that regulates translation and stability of mRNAs in processing bodies (P-bodies). Probably plays a role in P-bodies to coordinate the storage of translationally inactive mRNAs in the cytoplasm and prevent their degradation. Acts as a binding platform for multiple RNA-binding proteins. Required for the formation of P-bodies. This is Eukaryotic translation initiation factor 4E transporter from Drosophila melanogaster (Fruit fly).